The sequence spans 156 residues: Small ribosomal subunit protein uS7 (156 aa).

This sequence belongs to the universal ribosomal protein uS7 family. In terms of assembly, part of the 30S ribosomal subunit. Contacts proteins S9 and S11.

Its function is as follows. One of the primary rRNA binding proteins, it binds directly to 16S rRNA where it nucleates assembly of the head domain of the 30S subunit. Is located at the subunit interface close to the decoding center, probably blocks exit of the E-site tRNA. The protein is Small ribosomal subunit protein uS7 of Bifidobacterium longum subsp. infantis (strain ATCC 15697 / DSM 20088 / JCM 1222 / NCTC 11817 / S12).